Consider the following 68-residue polypeptide: uncharacterized protein (68 aa).

An N-terminal signal peptide occupies residues 1-21 (MELYREYPAWLIFLRRTYAVA).

This is an uncharacterized protein from Escherichia coli O157:H7.